The chain runs to 119 residues: NADH dehydrogenase [ubiquinone] 1 subunit C2 (119 aa).

A helical transmembrane segment spans residues 56–75; sequence GLHRQLLYITAFFFAGYYLV.

The protein belongs to the complex I NDUFC2 subunit family. As to quaternary structure, complex I is composed of 45 different subunits. Interacts with TMEM242.

The protein localises to the mitochondrion inner membrane. In terms of biological role, accessory subunit of the mitochondrial membrane respiratory chain NADH dehydrogenase (Complex I), that is believed not to be involved in catalysis but required for the complex assembly. Complex I functions in the transfer of electrons from NADH to the respiratory chain. The immediate electron acceptor for the enzyme is believed to be ubiquinone. This Gorilla gorilla gorilla (Western lowland gorilla) protein is NADH dehydrogenase [ubiquinone] 1 subunit C2.